Reading from the N-terminus, the 103-residue chain is Large ribosomal subunit protein uL24 (103 aa).

The protein belongs to the universal ribosomal protein uL24 family. As to quaternary structure, part of the 50S ribosomal subunit.

One of two assembly initiator proteins, it binds directly to the 5'-end of the 23S rRNA, where it nucleates assembly of the 50S subunit. Functionally, one of the proteins that surrounds the polypeptide exit tunnel on the outside of the subunit. In Haemophilus influenzae (strain 86-028NP), this protein is Large ribosomal subunit protein uL24.